Consider the following 550-residue polypeptide: Dihydroxy-acid dehydratase (550 aa).

D78 lines the Mg(2+) pocket. C119 is a binding site for [2Fe-2S] cluster. D120 and K121 together coordinate Mg(2+). Residue K121 is modified to N6-carboxylysine. Residue C191 coordinates [2Fe-2S] cluster. E440 is a binding site for Mg(2+). The Proton acceptor role is filled by S466.

This sequence belongs to the IlvD/Edd family. As to quaternary structure, homodimer. It depends on [2Fe-2S] cluster as a cofactor. The cofactor is Mg(2+).

It catalyses the reaction (2R)-2,3-dihydroxy-3-methylbutanoate = 3-methyl-2-oxobutanoate + H2O. The catalysed reaction is (2R,3R)-2,3-dihydroxy-3-methylpentanoate = (S)-3-methyl-2-oxopentanoate + H2O. The protein operates within amino-acid biosynthesis; L-isoleucine biosynthesis; L-isoleucine from 2-oxobutanoate: step 3/4. It participates in amino-acid biosynthesis; L-valine biosynthesis; L-valine from pyruvate: step 3/4. Its function is as follows. Functions in the biosynthesis of branched-chain amino acids. Catalyzes the dehydration of (2R,3R)-2,3-dihydroxy-3-methylpentanoate (2,3-dihydroxy-3-methylvalerate) into 2-oxo-3-methylpentanoate (2-oxo-3-methylvalerate) and of (2R)-2,3-dihydroxy-3-methylbutanoate (2,3-dihydroxyisovalerate) into 2-oxo-3-methylbutanoate (2-oxoisovalerate), the penultimate precursor to L-isoleucine and L-valine, respectively. This chain is Dihydroxy-acid dehydratase, found in Methanococcus maripaludis (strain C5 / ATCC BAA-1333).